The following is a 200-amino-acid chain: H-2 class I histocompatibility antigen, Q9 alpha chain (200 aa).

Positions M1 to A21 are cleaved as a signal peptide. The tract at residues G22–G111 is alpha-1. Over G22 to L200 the chain is Extracellular. An N-linked (GlcNAc...) asparagine glycan is attached at N107. The tract at residues G112–L200 is alpha-2. C122 and C185 are disulfide-bonded.

It belongs to the MHC class I family. As to quaternary structure, heterodimer of an alpha chain and a beta chain (beta-2-microglobulin).

The protein resides in the membrane. In terms of biological role, involved in the presentation of foreign antigens to the immune system. This is H-2 class I histocompatibility antigen, Q9 alpha chain (H2-Q9) from Mus musculus (Mouse).